A 638-amino-acid chain; its full sequence is Phosphomethylpyrimidine synthase (638 aa).

Residues N236, M265, Y294, H330, 350–352 (SRG), 391–394 (DGLR), and E430 each bind substrate. Residue H434 participates in Zn(2+) binding. Y457 is a substrate binding site. H498 serves as a coordination point for Zn(2+). [4Fe-4S] cluster is bound by residues C578, C581, and C586.

The protein belongs to the ThiC family. As to quaternary structure, homodimer. The cofactor is [4Fe-4S] cluster.

It carries out the reaction 5-amino-1-(5-phospho-beta-D-ribosyl)imidazole + S-adenosyl-L-methionine = 4-amino-2-methyl-5-(phosphooxymethyl)pyrimidine + CO + 5'-deoxyadenosine + formate + L-methionine + 3 H(+). It functions in the pathway cofactor biosynthesis; thiamine diphosphate biosynthesis. Its function is as follows. Catalyzes the synthesis of the hydroxymethylpyrimidine phosphate (HMP-P) moiety of thiamine from aminoimidazole ribotide (AIR) in a radical S-adenosyl-L-methionine (SAM)-dependent reaction. The sequence is that of Phosphomethylpyrimidine synthase from Polaromonas sp. (strain JS666 / ATCC BAA-500).